Here is a 151-residue protein sequence, read N- to C-terminus: UPF0735 ACT domain-containing protein SAUSA300_1599 (151 aa).

The ACT domain maps to 74-149 (TLILYVTDIV…YVSKVELISM (76 aa)).

It belongs to the UPF0735 family.

This chain is UPF0735 ACT domain-containing protein SAUSA300_1599, found in Staphylococcus aureus (strain USA300).